Consider the following 447-residue polypeptide: N-succinylarginine dihydrolase (447 aa).

Residues 19 to 28 (AGLSFGNEAS), Asn110, and 137 to 138 (HR) contribute to the substrate site. Glu174 is an active-site residue. Arg214 lines the substrate pocket. His250 is a catalytic residue. Substrate contacts are provided by Asp252 and Asn365. The active-site Nucleophile is Cys371.

It belongs to the succinylarginine dihydrolase family. Homodimer.

The enzyme catalyses N(2)-succinyl-L-arginine + 2 H2O + 2 H(+) = N(2)-succinyl-L-ornithine + 2 NH4(+) + CO2. The protein operates within amino-acid degradation; L-arginine degradation via AST pathway; L-glutamate and succinate from L-arginine: step 2/5. Functionally, catalyzes the hydrolysis of N(2)-succinylarginine into N(2)-succinylornithine, ammonia and CO(2). In Acinetobacter baumannii (strain ACICU), this protein is N-succinylarginine dihydrolase.